A 917-amino-acid chain; its full sequence is Hexokinase-2 (917 aa).

M1 carries the N-acetylmethionine modification. Residues 1–16 are mitochondrial-binding peptide (MBP); the sequence is MIASHLLAYFFTELNH. 2 consecutive Hexokinase domains span residues 16 to 458 and 464 to 906; these read HDQV…MVTA and AYQH…LITA. Residues R30 and 84 to 89 contribute to the ATP site; that span reads DLGGTN. Positions 73–207 are hexokinase small subdomain 1; it reads DGTEHGEFLA…DFDIDIVAMV (135 aa). A D-glucose 6-phosphate-binding site is contributed by 84–88; the sequence is DLGGT. D-glucose-binding positions include 155–156, 172–173, 208–209, N235, E260, and 291–294; these read SF, TK, ND, and QLFE. The segment at 208-447 is hexokinase large subdomain 1; that stretch reads NDTVATMMTC…CDIRFLCSED (240 aa). D209 contributes to the D-glucose 6-phosphate binding site. 413–415 contributes to the D-glucose 6-phosphate binding site; the sequence is DGS. 425 to 426 provides a ligand contact to ATP; that stretch reads KR. D-glucose 6-phosphate-binding positions include S449 and 532 to 536; that span reads DLGGT. Residues 521–655 are hexokinase small subdomain 2; the sequence is DGTEKGDFLA…EFDLDVVAVV (135 aa). 532-537 lines the ATP pocket; it reads DLGGTN. Residues 603–604, 620–621, and 656–657 each bind D-glucose; these read SF, TK, and ND. Residues 656-895 are hexokinase large subdomain 2; the sequence is NDTVGTMMTC…CDVSFLESED (240 aa). D-glucose 6-phosphate-binding residues include D657 and T680. T680 is an ATP binding site. Residues 682–683, E708, and 739–742 each bind D-glucose; these read SN and QRFE. Residues 747 to 748, 784 to 788, and 863 to 867 contribute to the ATP site; these read GM, TKFLS, and TLYKL. D-glucose 6-phosphate contacts are provided by residues 861 to 863 and S897; that span reads DGT.

It belongs to the hexokinase family. In terms of assembly, monomer. Interacts with TIGAR; the interaction increases hexokinase activity in a hypoxia- and HIF1A-dependent manner.

The protein localises to the mitochondrion outer membrane. It is found in the cytoplasm. Its subcellular location is the cytosol. The enzyme catalyses a D-hexose + ATP = a D-hexose 6-phosphate + ADP + H(+). The catalysed reaction is D-fructose + ATP = D-fructose 6-phosphate + ADP + H(+). It carries out the reaction D-glucose + ATP = D-glucose 6-phosphate + ADP + H(+). It participates in carbohydrate metabolism; hexose metabolism. Its pathway is carbohydrate degradation; glycolysis; D-glyceraldehyde 3-phosphate and glycerone phosphate from D-glucose: step 1/4. With respect to regulation, hexokinase activity is specifically inhibited by 2,6-disubstituted glucosamines. Catalyzes the phosphorylation of hexose, such as D-glucose and D-fructose, to hexose 6-phosphate (D-glucose 6-phosphate and D-fructose 6-phosphate, respectively). Mediates the initial step of glycolysis by catalyzing phosphorylation of D-glucose to D-glucose 6-phosphate. Plays a key role in maintaining the integrity of the outer mitochondrial membrane by preventing the release of apoptogenic molecules from the intermembrane space and subsequent apoptosis. The polypeptide is Hexokinase-2 (Equus zebra (Mountain zebra)).